The sequence spans 215 residues: Peptide methionine sulfoxide reductase MsrA (215 aa).

Residue cysteine 58 is part of the active site.

It belongs to the MsrA Met sulfoxide reductase family.

It catalyses the reaction L-methionyl-[protein] + [thioredoxin]-disulfide + H2O = L-methionyl-(S)-S-oxide-[protein] + [thioredoxin]-dithiol. The catalysed reaction is [thioredoxin]-disulfide + L-methionine + H2O = L-methionine (S)-S-oxide + [thioredoxin]-dithiol. Its function is as follows. Has an important function as a repair enzyme for proteins that have been inactivated by oxidation. Catalyzes the reversible oxidation-reduction of methionine sulfoxide in proteins to methionine. The chain is Peptide methionine sulfoxide reductase MsrA from Pseudomonas aeruginosa (strain UCBPP-PA14).